Consider the following 564-residue polypeptide: Potassium-transporting ATPase potassium-binding subunit (564 aa).

Helical transmembrane passes span 4–24, 67–87, 135–155, 179–199, 258–278, 286–306, 376–396, 420–440, 487–507, and 528–548; these read HEILLILAFFALVLVPAPFLG, TLALLAFNLAGLVLLFSILML, VGLTVQNFVSAAVGLCVLVAL, LYVLLPLCLLLALLLVWQGVP, FEVASIILIPAALVFTFGHYV, AILGCMLLLFCLGLGLSLWAE, IFGGVGAGLYGMLLFVLIAVF, LLVFTLLVMPVGVLVLGAIAA, LMIGLAMLIGRFGYILPILAI, and GPLFVSLLTVTILLVGGLTFL.

This sequence belongs to the KdpA family. In terms of assembly, the system is composed of three essential subunits: KdpA, KdpB and KdpC.

It is found in the cell inner membrane. Part of the high-affinity ATP-driven potassium transport (or Kdp) system, which catalyzes the hydrolysis of ATP coupled with the electrogenic transport of potassium into the cytoplasm. This subunit binds the periplasmic potassium ions and delivers the ions to the membrane domain of KdpB through an intramembrane tunnel. This Pseudomonas aeruginosa (strain ATCC 15692 / DSM 22644 / CIP 104116 / JCM 14847 / LMG 12228 / 1C / PRS 101 / PAO1) protein is Potassium-transporting ATPase potassium-binding subunit.